Consider the following 91-residue polypeptide: DNA-binding protein HU-beta 2 (91 aa).

The protein belongs to the bacterial histone-like protein family.

Histone-like DNA-binding protein which is capable of wrapping DNA to stabilize it, and thus to prevent its denaturation under extreme environmental conditions. The polypeptide is DNA-binding protein HU-beta 2 (hupB2) (Neisseria meningitidis serogroup A / serotype 4A (strain DSM 15465 / Z2491)).